Consider the following 451-residue polypeptide: Speckle-type POZ protein homolog (451 aa).

The interval 51 to 75 (EVVSSGSGNSAHGRSISPSPSSASH) is disordered. The span at 60 to 75 (SAHGRSISPSPSSASH) shows a compositional bias: low complexity. In terms of domain architecture, MATH spans 95-225 (KFNYMWTINN…GDRLSIFCEV (131 aa)). The BTB domain occupies 265-338 (SDFTLVCKSD…MYTGQTKYIE (74 aa)).

This sequence belongs to the Tdpoz family.

It localises to the nucleus. It is found in the nucleus speckle. The protein operates within protein modification; protein ubiquitination. Mediates ubiquitination and proteasomal degradation of target proteins, most likely in complex with cul-3. May promote the degradation of bromodomain-containing proteins such as bet-1. In Caenorhabditis elegans, this protein is Speckle-type POZ protein homolog.